We begin with the raw amino-acid sequence, 350 residues long: Mitogen-activated protein kinase HOG1 (350 aa).

Residues 20–299 (YTDLQPVGMG…AAQALAHEYL (280 aa)) enclose the Protein kinase domain. Residues 26 to 34 (VGMGAFGLV) and Lys49 contribute to the ATP site. The Proton acceptor role is filled by Asp141. The TXY signature appears at 171-173 (TGY).

It belongs to the protein kinase superfamily. Ser/Thr protein kinase family. MAP kinase subfamily. HOG1 sub-subfamily. It depends on Mg(2+) as a cofactor.

The protein localises to the cytoplasm. It localises to the nucleus. It carries out the reaction L-seryl-[protein] + ATP = O-phospho-L-seryl-[protein] + ADP + H(+). It catalyses the reaction L-threonyl-[protein] + ATP = O-phospho-L-threonyl-[protein] + ADP + H(+). Functionally, proline-directed serine/threonine-protein kinase involved in a signal transduction pathway that is activated by changes in the osmolarity of the extracellular environment. Controls osmotic regulation of transcription of target genes. Involved in environmental stress response. Via the downstream MSN2 transcription factor, may play roles in the regulation of growth, conidiation, trap development, fatty acid metabolism and secondary metabolites biosynthesis. The sequence is that of Mitogen-activated protein kinase HOG1 from Arthrobotrys oligospora (strain ATCC 24927 / CBS 115.81 / DSM 1491) (Nematode-trapping fungus).